A 127-amino-acid polypeptide reads, in one-letter code: NHP2-like protein 1 homolog (127 aa).

This sequence belongs to the eukaryotic ribosomal protein eL8 family.

It localises to the nucleus. Its subcellular location is the nucleolus. In terms of biological role, binds to the 5'-stem-loop of U4 snRNA and may play a role in the late stage of spliceosome assembly. The protein undergoes a conformational change upon RNA-binding. This Drosophila melanogaster (Fruit fly) protein is NHP2-like protein 1 homolog (hoip).